A 498-amino-acid chain; its full sequence is UDP-N-acetylmuramoylalanine--D-glutamate ligase (498 aa).

ATP is bound at residue 119–125 (GTNGKST).

Belongs to the MurCDEF family.

The protein localises to the cytoplasm. The enzyme catalyses UDP-N-acetyl-alpha-D-muramoyl-L-alanine + D-glutamate + ATP = UDP-N-acetyl-alpha-D-muramoyl-L-alanyl-D-glutamate + ADP + phosphate + H(+). It participates in cell wall biogenesis; peptidoglycan biosynthesis. Cell wall formation. Catalyzes the addition of glutamate to the nucleotide precursor UDP-N-acetylmuramoyl-L-alanine (UMA). The chain is UDP-N-acetylmuramoylalanine--D-glutamate ligase from Wolbachia sp. subsp. Brugia malayi (strain TRS).